The sequence spans 569 residues: Proline--tRNA ligase (569 aa).

This sequence belongs to the class-II aminoacyl-tRNA synthetase family. ProS type 1 subfamily. Homodimer.

It localises to the cytoplasm. The catalysed reaction is tRNA(Pro) + L-proline + ATP = L-prolyl-tRNA(Pro) + AMP + diphosphate. Catalyzes the attachment of proline to tRNA(Pro) in a two-step reaction: proline is first activated by ATP to form Pro-AMP and then transferred to the acceptor end of tRNA(Pro). As ProRS can inadvertently accommodate and process non-cognate amino acids such as alanine and cysteine, to avoid such errors it has two additional distinct editing activities against alanine. One activity is designated as 'pretransfer' editing and involves the tRNA(Pro)-independent hydrolysis of activated Ala-AMP. The other activity is designated 'posttransfer' editing and involves deacylation of mischarged Ala-tRNA(Pro). The misacylated Cys-tRNA(Pro) is not edited by ProRS. In Legionella pneumophila (strain Lens), this protein is Proline--tRNA ligase.